Reading from the N-terminus, the 356-residue chain is Mannonate dehydratase 2 (356 aa).

This sequence belongs to the mannonate dehydratase family. Requires Fe(2+) as cofactor. Mn(2+) is required as a cofactor.

It carries out the reaction D-mannonate = 2-dehydro-3-deoxy-D-gluconate + H2O. The protein operates within carbohydrate metabolism; pentose and glucuronate interconversion. Catalyzes the dehydration of D-mannonate. In Bacillus licheniformis (strain ATCC 14580 / DSM 13 / JCM 2505 / CCUG 7422 / NBRC 12200 / NCIMB 9375 / NCTC 10341 / NRRL NRS-1264 / Gibson 46), this protein is Mannonate dehydratase 2.